Reading from the N-terminus, the 390-residue chain is L-rhamnonate dehydratase (390 aa).

Residues His-19 and Arg-45 each contribute to the substrate site. Mg(2+)-binding residues include Asp-211, Glu-237, and Glu-265. The Proton acceptor role is filled by His-315. Residue Glu-335 coordinates substrate.

The protein belongs to the mandelate racemase/muconate lactonizing enzyme family. RhamD subfamily. Requires Mg(2+) as cofactor.

It catalyses the reaction L-rhamnonate = 2-dehydro-3-deoxy-L-rhamnonate + H2O. Catalyzes the dehydration of L-rhamnonate to 2-keto-3-deoxy-L-rhamnonate (KDR). In Saccharopolyspora erythraea (strain ATCC 11635 / DSM 40517 / JCM 4748 / NBRC 13426 / NCIMB 8594 / NRRL 2338), this protein is L-rhamnonate dehydratase.